We begin with the raw amino-acid sequence, 73 residues long: Translation initiation factor IF-1 (73 aa).

Positions 1–73 constitute an S1-like domain; it reads MAKKDGVIEI…TRGRIVYRYK (73 aa).

This sequence belongs to the IF-1 family. In terms of assembly, component of the 30S ribosomal translation pre-initiation complex which assembles on the 30S ribosome in the order IF-2 and IF-3, IF-1 and N-formylmethionyl-tRNA(fMet); mRNA recruitment can occur at any time during PIC assembly.

Its subcellular location is the cytoplasm. Functionally, one of the essential components for the initiation of protein synthesis. Stabilizes the binding of IF-2 and IF-3 on the 30S subunit to which N-formylmethionyl-tRNA(fMet) subsequently binds. Helps modulate mRNA selection, yielding the 30S pre-initiation complex (PIC). Upon addition of the 50S ribosomal subunit IF-1, IF-2 and IF-3 are released leaving the mature 70S translation initiation complex. In Paenarthrobacter aurescens (strain TC1), this protein is Translation initiation factor IF-1.